The following is a 97-amino-acid chain: Carboxypeptidase inhibitor (97 aa).

The N-terminal stretch at 1-22 is a signal peptide; it reads MAATLPVFAVVFFAMVLASSQA.

It localises to the secreted. Functionally, potent competitive inhibitor of metallo-carboxypeptidases CPA1, CPA2, CPB, CPN, and TAF1a. Also inhibits human CPA4. Accelerates fibrinolysis in vitro and may contribute to the maintenance of host blood liquidity during feeding. The chain is Carboxypeptidase inhibitor from Rhipicephalus bursa (Tick).